The primary structure comprises 592 residues: Aspartate--tRNA ligase (592 aa).

Glutamate 171 lines the L-aspartate pocket. An aspartate region spans residues 195-198 (QLFK). Arginine 217 contributes to the L-aspartate binding site. Residues 217 to 219 (RDE) and glutamine 226 each bind ATP. Histidine 448 lines the L-aspartate pocket. Glutamate 482 contacts ATP. Position 489 (arginine 489) interacts with L-aspartate. 534 to 537 (GLDR) contacts ATP.

This sequence belongs to the class-II aminoacyl-tRNA synthetase family. Type 1 subfamily. Homodimer.

Its subcellular location is the cytoplasm. It carries out the reaction tRNA(Asp) + L-aspartate + ATP = L-aspartyl-tRNA(Asp) + AMP + diphosphate. Functionally, catalyzes the attachment of L-aspartate to tRNA(Asp) in a two-step reaction: L-aspartate is first activated by ATP to form Asp-AMP and then transferred to the acceptor end of tRNA(Asp). This chain is Aspartate--tRNA ligase, found in Vibrio vulnificus (strain YJ016).